A 406-amino-acid polypeptide reads, in one-letter code: WD repeat and SOCS box-containing protein 2 (406 aa).

Residues 70–89 (AKSRSSKNETKGRGSPKEKT) are disordered. 5 WD repeats span residues 107 to 150 (PPSK…LLLN), 153 to 193 (GHQD…KQIQ), 197 to 236 (GHLQWVYCCSISPDCSMLCSAAGEKSVFLWSMRSYTLIRK), 239 to 278 (GHQSSVVSCDFSPDSALLVTASYDTNVIMWDPYTGERLRS), and 293 to 332 (VHISSLRSVCFSPEGLYLATVADDRLLRIWALELKTPIAF). The SOCS box domain maps to 358 to 406 (HVQFWTAPRVLSSLKHLCRKALRSFLTTYQVLALPIPKKMKEFLTYRTF).

Its pathway is protein modification; protein ubiquitination. Functionally, may be a substrate-recognition component of a SCF-like ECS (Elongin-Cullin-SOCS-box protein) E3 ubiquitin ligase complex which mediates the ubiquitination and subsequent proteasomal degradation of target proteins. This Bos taurus (Bovine) protein is WD repeat and SOCS box-containing protein 2 (WSB2).